Here is an 88-residue protein sequence, read N- to C-terminus: Small ribosomal subunit protein bS20 (88 aa).

This sequence belongs to the bacterial ribosomal protein bS20 family.

Its function is as follows. Binds directly to 16S ribosomal RNA. This chain is Small ribosomal subunit protein bS20, found in Brucella abortus (strain S19).